Consider the following 337-residue polypeptide: Large ribosomal subunit protein uL3 (337 aa).

It belongs to the universal ribosomal protein uL3 family. Part of the 50S ribosomal subunit. Forms a cluster with proteins L14 and L24e.

Its function is as follows. One of the primary rRNA binding proteins, it binds directly near the 3'-end of the 23S rRNA, where it nucleates assembly of the 50S subunit. The chain is Large ribosomal subunit protein uL3 from Methanosphaerula palustris (strain ATCC BAA-1556 / DSM 19958 / E1-9c).